The sequence spans 502 residues: Keratin, type II microfibrillar, component 5 (502 aa).

Blocked amino end (Ser) is present on serine 1. The head stretch occupies residues 1-122 (SCRSYRISPG…PNAQCVKHQE (122 aa)). The 312-residue stretch at 122–433 (EKEQIKNLNS…RLLEGEEQRL (312 aa)) folds into the IF rod domain. A coil 1A region spans residues 123 to 157 (KEQIKNLNSRFAAFIDKVRFLEQQNKLLETKWQFY). The interval 158–167 (QNQRCCESNL) is linker 1. Positions 168–268 (EPLFNGYIET…YDEEIQILNA (101 aa)) are coil 1B. Residue lysine 228 forms a Glycyl lysine isopeptide (Lys-Gly) (interchain with G-Cter in SUMO1) linkage. Residues 269–285 (HISDTSVIVKMDNSRDL) form a linker 12 region. Residues 286–429 (NMDCVVAEIK…ATYRRLLEGE (144 aa)) are coil 2. The tract at residues 430 to 502 (EQRLCEGVGS…CGSSRSVRFA (73 aa)) is tail.

Belongs to the intermediate filament family. Hard keratin wool.

Its function is as follows. Wool microfibrillar keratin. This is Keratin, type II microfibrillar, component 5 from Ovis aries (Sheep).